The sequence spans 351 residues: AA9 family lytic polysaccharide monooxygenase A (351 aa).

An N-terminal signal peptide occupies residues 1 to 20 (MSNKAATLLAALSGAALVAA). Cu(2+) is bound by residues H21 and H107. A disulfide bond links C76 and C196. 2 residues coordinate O2: H182 and Q191. A Cu(2+)-binding site is contributed by Y193. In terms of domain architecture, CBM1 spans 315 to 351 (GVAPKWGQCGGNGWTGPTVCASGSTCTVLNPYYSQCI).

The protein belongs to the polysaccharide monooxygenase AA9 family. The cofactor is Cu(2+).

Its subcellular location is the secreted. It carries out the reaction [(1-&gt;4)-beta-D-glucosyl]n+m + reduced acceptor + O2 = 4-dehydro-beta-D-glucosyl-[(1-&gt;4)-beta-D-glucosyl]n-1 + [(1-&gt;4)-beta-D-glucosyl]m + acceptor + H2O.. Lytic polysaccharide monooxygenase (LPMO) that depolymerizes crystalline and amorphous polysaccharides via the oxidation of scissile alpha- or beta-(1-4)-glycosidic bonds, yielding C1 and C4 oxidation products. Catalysis by LPMOs requires the reduction of the active-site copper from Cu(II) to Cu(I) by a reducing agent and H(2)O(2) or O(2) as a cosubstrate. The sequence is that of AA9 family lytic polysaccharide monooxygenase A from Podospora anserina (strain S / ATCC MYA-4624 / DSM 980 / FGSC 10383) (Pleurage anserina).